The sequence spans 252 residues: NAC domain-containing protein 23 (252 aa).

Residues 12-177 (MPPGFRFQPT…EMVLCRISNK (166 aa)) enclose the NAC domain. Residues 110 to 183 (TAVKRRFVFY…ISNKDLPKPP (74 aa)) mediate DNA binding. The segment at 225–252 (VDDAAAGTDDPGDLDEEIDDSMQRNHGG) is disordered. Over residues 234–244 (DPGDLDEEIDD) the composition is skewed to acidic residues.

As to quaternary structure, forms heterodimers with NAC26. As to expression, expressed in stems and panicles. Expressed in developing endosperm.

It localises to the nucleus. The protein localises to the cytoplasm. Functionally, transcription factor involved in the regulation of seed size. Binds to DNA-specific sequences of CLPD1 and OAT promoters in vitro. In Oryza sativa subsp. japonica (Rice), this protein is NAC domain-containing protein 23.